The primary structure comprises 80 residues: Metallothionein-like protein type 2 MET1 (80 aa).

The protein belongs to the metallothionein superfamily. Type 15 family.

In terms of biological role, metallothioneins have a high content of cysteine residues that bind various heavy metals. This is Metallothionein-like protein type 2 MET1 (MET1) from Fragaria ananassa (Strawberry).